A 209-amino-acid chain; its full sequence is Abscisic acid receptor PYL5 (209 aa).

Residues 44–196 form an START-like region; sequence HAPGEHQCSS…NLTSLAEVSE (153 aa). The cysteines at positions 51 and 177 are disulfide-linked. Abscisate-binding positions include lysine 80, 109–114, 136–142, and glutamate 161; these read ATTSTE and RLRNYSS. The Gate loop signature appears at 105 to 109; it reads TGLPA. Residues 135–137 carry the Latch loop motif; it reads HRL.

It belongs to the PYR/PYL/RCAR abscisic acid intracellular receptor family. Monomer. Interacts with PP2C30. Binding to PP2C30 is dependent on the presence of abscisic acid (ABA). Interacts with PP2C51. Binding to PP2C51 is dependent on the presence of ABA. Interacts with PP2C50. Binding to PP2C50 is dependent on the presence of ABA. Interacts with PP2C53. Expressed in leaf sheaths and leaf blades. Expressed at low levels in roots, flowers and seeds.

The protein localises to the nucleus. Its subcellular location is the cytoplasm. The protein resides in the cytosol. In terms of biological role, intracellular abscisic acid (ABA) receptor that functions as a positive regulator of ABA signaling pathway. Together with ABI5, PP2C30 and SAPK2, is part of an ABA signaling unit that modulates seed germination and early seedling growth. Acts as a positive regulator of abiotic stress-responsive gene expression. Inhibits the protein phosphatases PP2C06 and PP2C09 when activated by ABA. The protein is Abscisic acid receptor PYL5 of Oryza sativa subsp. japonica (Rice).